Consider the following 250-residue polypeptide: Coproheme decarboxylase (250 aa).

Residues Arg131, 145 to 149 (YPMNK), His172, and Gln185 contribute to the Fe-coproporphyrin III site. Residue Tyr145 is part of the active site.

Belongs to the ChdC family. Type 1 subfamily. Requires Fe-coproporphyrin III as cofactor.

The catalysed reaction is Fe-coproporphyrin III + 2 H2O2 + 2 H(+) = heme b + 2 CO2 + 4 H2O. It catalyses the reaction Fe-coproporphyrin III + H2O2 + H(+) = harderoheme III + CO2 + 2 H2O. It carries out the reaction harderoheme III + H2O2 + H(+) = heme b + CO2 + 2 H2O. The protein operates within porphyrin-containing compound metabolism; protoheme biosynthesis. Its function is as follows. Involved in coproporphyrin-dependent heme b biosynthesis. Catalyzes the decarboxylation of Fe-coproporphyrin III (coproheme) to heme b (protoheme IX), the last step of the pathway. The reaction occurs in a stepwise manner with a three-propionate intermediate. This is Coproheme decarboxylase from Staphylococcus aureus (strain MSSA476).